Here is a 273-residue protein sequence, read N- to C-terminus: Peptidoglycan-N-acetylglucosamine deacetylase BC_1974 (273 aa).

The helical transmembrane segment at 10 to 30 (IVVVLIAIAAVAIGYYMFQSI) threads the bilayer. A NodB homology domain is found at 69–255 (KVAYLTFDDG…GLKEKGYEFE (187 aa)). D76 serves as the catalytic Proton acceptor. Positions 77, 126, and 130 each coordinate Zn(2+). Catalysis depends on H230, which acts as the Proton donor.

This sequence belongs to the polysaccharide deacetylase family. Requires Zn(2+) as cofactor. Co(2+) serves as cofactor. Ni(2+) is required as a cofactor.

The protein localises to the cell membrane. The catalysed reaction is peptidoglycan-N-acetyl-D-glucosamine + H2O = peptidoglycan-D-glucosamine + acetate.. With respect to regulation, inhibited by the hydroxamate N-hydroxy-4-(naphthalene-1-yl)benzamide (NHNB). Functionally, catalyzes the deacetylation of N-acetylglucosamine (GlcNAc) residues in peptidoglycan. The sequence is that of Peptidoglycan-N-acetylglucosamine deacetylase BC_1974 from Bacillus cereus (strain ATCC 14579 / DSM 31 / CCUG 7414 / JCM 2152 / NBRC 15305 / NCIMB 9373 / NCTC 2599 / NRRL B-3711).